A 142-amino-acid polypeptide reads, in one-letter code: MKTYVAKPESVVHDWFIVDAAGKTLGRLSAEIASRLRGKHKPEFTPHVDTGDYIIVINAAKVRVTGNKATDKVYYHHTNFAGGIKSITFDKLIEKAPERTIQTAVKGMLPKGPLGYAMFKKLKVYAGAEHPHAAQQPKELNI.

This sequence belongs to the universal ribosomal protein uL13 family. In terms of assembly, part of the 50S ribosomal subunit.

Its function is as follows. This protein is one of the early assembly proteins of the 50S ribosomal subunit, although it is not seen to bind rRNA by itself. It is important during the early stages of 50S assembly. The protein is Large ribosomal subunit protein uL13 of Cellvibrio japonicus (strain Ueda107) (Pseudomonas fluorescens subsp. cellulosa).